We begin with the raw amino-acid sequence, 382 residues long: Lipid-A-disaccharide synthase (382 aa).

The protein belongs to the LpxB family.

The enzyme catalyses 2-N,3-O-bis[(3R)-3-hydroxytetradecanoyl]-alpha-D-glucosaminyl 1-phosphate + UDP-2-N,3-O-bis[(3R)-3-hydroxytetradecanoyl]-alpha-D-glucosamine = lipid A disaccharide (E. coli) + UDP + H(+). The catalysed reaction is a lipid X + a UDP-2-N,3-O-bis[(3R)-3-hydroxyacyl]-alpha-D-glucosamine = a lipid A disaccharide + UDP + H(+). The protein operates within glycolipid biosynthesis; lipid IV(A) biosynthesis; lipid IV(A) from (3R)-3-hydroxytetradecanoyl-[acyl-carrier-protein] and UDP-N-acetyl-alpha-D-glucosamine: step 5/6. Its function is as follows. Condensation of UDP-2,3-diacylglucosamine and 2,3-diacylglucosamine-1-phosphate to form lipid A disaccharide, a precursor of lipid A, a phosphorylated glycolipid that anchors the lipopolysaccharide to the outer membrane of the cell. The sequence is that of Lipid-A-disaccharide synthase from Escherichia coli (strain K12 / MC4100 / BW2952).